A 25-amino-acid chain; its full sequence is Granule-bound starch synthase 1, chloroplastic/amyloplastic (25 aa).

Lys-16 serves as a coordination point for ADP-alpha-D-glucose.

The protein belongs to the glycosyltransferase 1 family. Bacterial/plant glycogen synthase subfamily. As to expression, expressed in endosperm.

It localises to the plastid. Its subcellular location is the chloroplast. The protein resides in the amyloplast. The catalysed reaction is an NDP-alpha-D-glucose + [(1-&gt;4)-alpha-D-glucosyl](n) = [(1-&gt;4)-alpha-D-glucosyl](n+1) + a ribonucleoside 5'-diphosphate + H(+). It functions in the pathway glycan biosynthesis; starch biosynthesis. Its function is as follows. Required for the synthesis of amylose in endosperm. This is Granule-bound starch synthase 1, chloroplastic/amyloplastic from Fagopyrum esculentum (Common buckwheat).